Consider the following 259-residue polypeptide: Insulin-like growth factor-binding protein 4 (259 aa).

The N-terminal stretch at 1-22 is a signal peptide; it reads MLPLCLVAALLLSASGPRPSLG. An IGFBP N-terminal domain is found at 24–104; it reads EAIHCPPCSE…MHGQGLCMEL (81 aa). 6 disulfides stabilise this stretch: C28-C54, C31-C56, C39-C57, C45-C60, C68-C81, and C75-C101. Residues 115-136 form a disordered region; it reads QPSDKDEGDHPNNSFSPCSPQD. The N-linked (GlcNAc...) asparagine glycan is linked to N126. Cystine bridges form between C132–C139, C175–C205, C216–C227, and C229–C250. One can recognise a Thyroglobulin type-1 domain in the interval 172 to 250; the sequence is QGSCQSELHR…GLEPKGELDC (79 aa). S256 bears the Phosphoserine mark.

In terms of assembly, binds IGF2 more than IGF1.

It is found in the secreted. In terms of biological role, IGF-binding proteins prolong the half-life of the IGFs and have been shown to either inhibit or stimulate the growth promoting effects of the IGFs on cell culture. They alter the interaction of IGFs with their cell surface receptors. In Sus scrofa (Pig), this protein is Insulin-like growth factor-binding protein 4 (IGFBP4).